The chain runs to 148 residues: UPF0178 protein DP1304 (148 aa).

Belongs to the UPF0178 family.

The protein is UPF0178 protein DP1304 of Desulfotalea psychrophila (strain LSv54 / DSM 12343).